A 471-amino-acid polypeptide reads, in one-letter code: ATP synthase subunit beta (471 aa).

An ATP-binding site is contributed by 153–160; that stretch reads GGAGVGKT.

This sequence belongs to the ATPase alpha/beta chains family. As to quaternary structure, F-type ATPases have 2 components, CF(1) - the catalytic core - and CF(0) - the membrane proton channel. CF(1) has five subunits: alpha(3), beta(3), gamma(1), delta(1), epsilon(1). CF(0) has three main subunits: a(1), b(2) and c(9-12). The alpha and beta chains form an alternating ring which encloses part of the gamma chain. CF(1) is attached to CF(0) by a central stalk formed by the gamma and epsilon chains, while a peripheral stalk is formed by the delta and b chains.

The protein localises to the cell membrane. The enzyme catalyses ATP + H2O + 4 H(+)(in) = ADP + phosphate + 5 H(+)(out). Its function is as follows. Produces ATP from ADP in the presence of a proton gradient across the membrane. The catalytic sites are hosted primarily by the beta subunits. This Levilactobacillus brevis (strain ATCC 367 / BCRC 12310 / CIP 105137 / JCM 1170 / LMG 11437 / NCIMB 947 / NCTC 947) (Lactobacillus brevis) protein is ATP synthase subunit beta.